Here is a 273-residue protein sequence, read N- to C-terminus: MSLEQIIEQAFEKRAEYSPATMPQEVKDAVNSVLDQLDNGSLRVAEKKDGEWIVNQWAKKAVLLSFRLNDNYPMQTGEHVQFYDKVPTKFANWTEQQFVEAGVRVVPPAVARRGSFIAKGVVLMPSYTNIGAYVDEGAMIDTWATVGSCAQIGKNVHLSGGVGIGGVLEPLQANPTIIEDNCFIGARSEIVEGVIVEEGSVISMGVYIGQSTKIYDRETGEITYGRVPAGSVVVSGSLPSKDGSHSLYCAVIVKKVDAQTRSKTSINELLRLA.

Substrate-binding residues include Arg104 and Asp141.

Belongs to the transferase hexapeptide repeat family. As to quaternary structure, homotrimer.

The protein resides in the cytoplasm. The catalysed reaction is (S)-2,3,4,5-tetrahydrodipicolinate + succinyl-CoA + H2O = (S)-2-succinylamino-6-oxoheptanedioate + CoA. It participates in amino-acid biosynthesis; L-lysine biosynthesis via DAP pathway; LL-2,6-diaminopimelate from (S)-tetrahydrodipicolinate (succinylase route): step 1/3. This Psychrobacter sp. (strain PRwf-1) protein is 2,3,4,5-tetrahydropyridine-2,6-dicarboxylate N-succinyltransferase.